Consider the following 455-residue polypeptide: MHLYQLEDELKKNVFCREDQIKKLSCLLFNKDCRVPSIVLYGVASTAKTFLLRTAFDLSKEENVWINLQDCFTVAHFWYRILIKVGVDKDIALKKGINISGFIYLLEQAMSKRDYHTFLVLDQIDDFAEASTILFSQLAQLPIVANIPNLSIIFVLHSHPAQYLGTLSIAVIFFPQYTQAEILEICQKTPPNLDFLDRSGDSVFEDEIELSVWMQYCSFLWSVFGVQCLNDYRSFRSVLDRYWPKFIQPIVEGDIHPADYAQLHKLAKNFLVSDATVTKRLHIINPTEIKNLLDSKSINLSLVSKYLLVSAFLASYNPSRLDAQFFSFSKTSKRRGRKRKQIQDEGVLFSKIPRTAGSKGRSAVKISQLTLGPKPFEVERLIAIYYAISSPVEKVLTADVFVQIATLASLKMILSASKGVLRSLDSPRYIVNVSREYVLKIADSLSFPLDSYLAG.

42 to 49 is an ATP binding site; sequence GVASTAKT.

This sequence belongs to the ORC5 family. As to quaternary structure, ORC is composed of six subunits. ORC interacts with cdc18, recruiting it to the ars1 origin of replication.

The protein localises to the nucleus. Its function is as follows. Component of the origin recognition complex (ORC) that binds origins of replication. It has a role in both chromosomal replication and mating type transcriptional silencing. ORC binds to multiple sites within the ars1 origin of DNA replication in an ATP-independent manner. This Schizosaccharomyces pombe (strain 972 / ATCC 24843) (Fission yeast) protein is Origin recognition complex subunit 5 (orc5).